Here is a 317-residue protein sequence, read N- to C-terminus: MATSLRGLDAGPGSLRRWILICFAALLLLPPRPNLGYNENYTEPVCGTPWWPDNLEESHHWPWEASLQIEDKHVCGGALIDRSWVVSAAHCIQGNKEYSVMLGSSTLHPNGSSWTLKIPVGDIIIHPKYWGRNFIRSDIALLCLETPVTFNKYVQPICLPEHNFNFKVGTKCWVTGWGQVKQHSSAQLTPAPELWEAEVFIIDNKNCDSIFHKKTLYPQVVPLIRKNMICTTNYGEDLCYGDPGGPLACEIDGRWILAGVFSWEKACATVPNLSVYTRITKYTIWIKDQVSHGAQLGPCRTSWLLLLPWLLQLPVSL.

An N-terminal signal peptide occupies residues 1–35 (MATSLRGLDAGPGSLRRWILICFAALLLLPPRPNL). The N-linked (GlcNAc...) asparagine glycan is linked to asparagine 40. The Peptidase S1 domain occupies 44 to 291 (PVCGTPWWPD…YTIWIKDQVS (248 aa)). Residues cysteine 75 and cysteine 91 are joined by a disulfide bond. A glycan (N-linked (GlcNAc...) asparagine) is linked at asparagine 110. 3 disulfide bridges follow: cysteine 172–cysteine 249, cysteine 207–cysteine 230, and cysteine 239–cysteine 267. Asparagine 272 carries N-linked (GlcNAc...) asparagine glycosylation.

The protein belongs to the peptidase S1 family.

The protein localises to the secreted. This chain is Inactive serine protease 45, found in Mus musculus (Mouse).